The sequence spans 879 residues: Alanine--tRNA ligase (879 aa).

Positions 566, 570, 668, and 672 each coordinate Zn(2+).

This sequence belongs to the class-II aminoacyl-tRNA synthetase family. It depends on Zn(2+) as a cofactor.

It localises to the cytoplasm. It catalyses the reaction tRNA(Ala) + L-alanine + ATP = L-alanyl-tRNA(Ala) + AMP + diphosphate. Functionally, catalyzes the attachment of alanine to tRNA(Ala) in a two-step reaction: alanine is first activated by ATP to form Ala-AMP and then transferred to the acceptor end of tRNA(Ala). Also edits incorrectly charged Ser-tRNA(Ala) and Gly-tRNA(Ala) via its editing domain. This is Alanine--tRNA ligase from Clostridium botulinum (strain Alaska E43 / Type E3).